Consider the following 465-residue polypeptide: UDP-N-acetylmuramoylalanine--D-glutamate ligase (465 aa).

115-121 (GTDGKTT) lines the ATP pocket.

Belongs to the MurCDEF family.

The protein resides in the cytoplasm. The catalysed reaction is UDP-N-acetyl-alpha-D-muramoyl-L-alanine + D-glutamate + ATP = UDP-N-acetyl-alpha-D-muramoyl-L-alanyl-D-glutamate + ADP + phosphate + H(+). It participates in cell wall biogenesis; peptidoglycan biosynthesis. Functionally, cell wall formation. Catalyzes the addition of glutamate to the nucleotide precursor UDP-N-acetylmuramoyl-L-alanine (UMA). This chain is UDP-N-acetylmuramoylalanine--D-glutamate ligase, found in Chlorobaculum tepidum (strain ATCC 49652 / DSM 12025 / NBRC 103806 / TLS) (Chlorobium tepidum).